Consider the following 439-residue polypeptide: Glutamate-1-semialdehyde 2,1-aminomutase (439 aa).

Lys-279 is subject to N6-(pyridoxal phosphate)lysine.

It belongs to the class-III pyridoxal-phosphate-dependent aminotransferase family. HemL subfamily. As to quaternary structure, homodimer. Pyridoxal 5'-phosphate is required as a cofactor.

It is found in the cytoplasm. The enzyme catalyses (S)-4-amino-5-oxopentanoate = 5-aminolevulinate. It participates in porphyrin-containing compound metabolism; protoporphyrin-IX biosynthesis; 5-aminolevulinate from L-glutamyl-tRNA(Glu): step 2/2. This chain is Glutamate-1-semialdehyde 2,1-aminomutase, found in Rhodopirellula baltica (strain DSM 10527 / NCIMB 13988 / SH1).